Reading from the N-terminus, the 486-residue chain is RAC-beta serine/threonine-protein kinase A (486 aa).

Positions 5–110 constitute a PH domain; the sequence is MVIKEGWLQK…WIIAIQTVAN (106 aa). 2 O-linked (GlcNAc) serine glycosylation sites follow: Ser-133 and Ser-136. Residues 157–414 form the Protein kinase domain; sequence FDYLKLLGKG…AQEVMSHRFF (258 aa). Residues 163-171 and Lys-186 each bind ATP; that span reads LGKGTFGKV. Asp-280 (proton acceptor) is an active-site residue. The O-linked (GlcNAc) threonine glycan is linked to Thr-311. Thr-314 carries the phosphothreonine modification. Thr-318 carries O-linked (GlcNAc) threonine glycosylation. One can recognise an AGC-kinase C-terminal domain in the interval 415-486; that stretch reads VSINWQDVTE…QFSYSASIRE (72 aa). The interval 455–486 is disordered; that stretch reads LTPPDRYDNLDALESDQRPHFPQFSYSASIRE. The span at 459–473 shows a compositional bias: basic and acidic residues; the sequence is DRYDNLDALESDQRP. A Phosphoserine modification is found at Ser-479. A glycan (O-linked (GlcNAc) serine; alternate) is linked at Ser-479.

This sequence belongs to the protein kinase superfamily. AGC Ser/Thr protein kinase family. RAC subfamily. Post-translationally, phosphorylation on Thr-314 and Ser-479 is required for full activity. Phosphorylation of the activation loop at Thr-314 by PDPK1/PDK1 is a prerequisite for full activation. Phosphorylation by mTORC2 at Ser-479 in response to growth factors plays a key role in AKT1 activation by facilitating subsequent phosphorylation of the activation loop by PDPK1/PDK1.

It catalyses the reaction L-seryl-[protein] + ATP = O-phospho-L-seryl-[protein] + ADP + H(+). It carries out the reaction L-threonyl-[protein] + ATP = O-phospho-L-threonyl-[protein] + ADP + H(+). With respect to regulation, two specific sites, one in the kinase domain (Thr-314) and the other in the C-terminal regulatory region (Ser-479), need to be phosphorylated for its full activation. Akt2-a is one of several closely related serine/threonine-protein kinases known as the AKT kinase, and which regulate many processes including metabolism, proliferation, cell survival, growth and angiogenesis. This is mediated through serine and/or threonine phosphorylation of a range of downstream substrates. Over 100 substrate candidates have been reported so far, but for most of them, no isoform specificity has been reported. May be involved in the inhibition of ciliogenesis. This is RAC-beta serine/threonine-protein kinase A (akt2-a) from Xenopus laevis (African clawed frog).